A 570-amino-acid polypeptide reads, in one-letter code: Trans-cinnamate:CoA ligase, peroxisomal (570 aa).

The Microbody targeting signal motif lies at 568 to 570 (ARL).

This sequence belongs to the ATP-dependent AMP-binding enzyme family. Monomer. K(+) is required as a cofactor. Mostly expressed in flower organs, with highest levels in corollas and petal limbs, and, to a lesser extent, in petal tubes, sepals, pistils, stamen, stigma, anthers and ovaries. Also present at low levels in leaves, stems and roots.

The protein localises to the peroxisome. It carries out the reaction (E)-4-coumarate + ATP + CoA = (E)-4-coumaroyl-CoA + AMP + diphosphate. It catalyses the reaction (E)-caffeate + ATP + CoA = (E)-caffeoyl-CoA + AMP + diphosphate. The catalysed reaction is (E)-cinnamate + ATP + CoA = (E)-cinnamoyl-CoA + AMP + diphosphate. It participates in phenylpropanoid metabolism; trans-cinnamate biosynthesis. Its pathway is phytoalexin biosynthesis; 3,4',5-trihydroxystilbene biosynthesis; 3,4',5-trihydroxystilbene from trans-4-coumarate: step 1/2. In terms of biological role, involved in the biosynthesis of floral volatile benzenoid/phenylpropanoid (FVBP) scent (e.g. benzylbenzoate, phenylethylbenzoate, and methylbenzoate). Catalyzes the formation of CoA esters of cinnamic acid, and, with lower efficiency, of 4-coumaric acid and caffeic acid. This Petunia hybrida (Petunia) protein is Trans-cinnamate:CoA ligase, peroxisomal.